A 527-amino-acid chain; its full sequence is Bromodomain-containing protein 9 (527 aa).

Basic residues predominate over residues 1–16 (MNVSVTKRRKKKKKKK). Residues 1–54 (MNVSVTKRRKKKKKKKSEKEKDKYLDEDERRRRKEEKKRKREKEQCDSEGETEV) are disordered. Residues 17 to 30 (SEKEKDKYLDEDER) are compositionally biased toward basic and acidic residues. A compositionally biased stretch (basic residues) spans 31–41 (RRRKEEKKRKR). The region spanning 78–182 (NESTPLQQLL…HTGFKMMSKA (105 aa)) is the Bromo domain. The interval 156–158 (TYN) is histone H4K5ac H4K8ac and histone H4K5bu H4K8bu binding. The segment covering 468 to 478 (DFHDVHNDRGG) has biased composition (basic and acidic residues). Residues 468–527 (DFHDVHNDRGGSRPSSSSSMSNNSERDHHLGSPSRISVGEQQDIHDPYEFLQSPETDNQN) are disordered. Residues 479–490 (SRPSSSSSMSNN) show a composition bias toward low complexity.

Binds acetylated histones H3 and H4. Binds butyrylated histone H4.

It is found in the nucleus. Functionally, plays a role in chromatin remodeling and regulation of transcription. Acts as a chromatin reader that recognizes and binds acylated histones: binds histones that are acetylated and/or butyrylated. The polypeptide is Bromodomain-containing protein 9 (brd9) (Xenopus laevis (African clawed frog)).